The primary structure comprises 959 residues: Glycine dehydrogenase (decarboxylating) (959 aa).

N6-(pyridoxal phosphate)lysine is present on K707.

This sequence belongs to the GcvP family. The glycine cleavage system is composed of four proteins: P, T, L and H. Pyridoxal 5'-phosphate is required as a cofactor.

The enzyme catalyses N(6)-[(R)-lipoyl]-L-lysyl-[glycine-cleavage complex H protein] + glycine + H(+) = N(6)-[(R)-S(8)-aminomethyldihydrolipoyl]-L-lysyl-[glycine-cleavage complex H protein] + CO2. The glycine cleavage system catalyzes the degradation of glycine. The P protein binds the alpha-amino group of glycine through its pyridoxal phosphate cofactor; CO(2) is released and the remaining methylamine moiety is then transferred to the lipoamide cofactor of the H protein. This chain is Glycine dehydrogenase (decarboxylating), found in Photobacterium profundum (strain SS9).